The following is a 250-amino-acid chain: Leucyl/phenylalanyl-tRNA--protein transferase (250 aa).

Belongs to the L/F-transferase family.

It is found in the cytoplasm. It catalyses the reaction N-terminal L-lysyl-[protein] + L-leucyl-tRNA(Leu) = N-terminal L-leucyl-L-lysyl-[protein] + tRNA(Leu) + H(+). The enzyme catalyses N-terminal L-arginyl-[protein] + L-leucyl-tRNA(Leu) = N-terminal L-leucyl-L-arginyl-[protein] + tRNA(Leu) + H(+). It carries out the reaction L-phenylalanyl-tRNA(Phe) + an N-terminal L-alpha-aminoacyl-[protein] = an N-terminal L-phenylalanyl-L-alpha-aminoacyl-[protein] + tRNA(Phe). Functionally, functions in the N-end rule pathway of protein degradation where it conjugates Leu, Phe and, less efficiently, Met from aminoacyl-tRNAs to the N-termini of proteins containing an N-terminal arginine or lysine. This is Leucyl/phenylalanyl-tRNA--protein transferase from Cupriavidus necator (strain ATCC 17699 / DSM 428 / KCTC 22496 / NCIMB 10442 / H16 / Stanier 337) (Ralstonia eutropha).